We begin with the raw amino-acid sequence, 193 residues long: Xanthine phosphoribosyltransferase (193 aa).

Residues Leu-20 and Asn-27 each contribute to the xanthine site. 128–132 (ASGGT) contacts 5-phospho-alpha-D-ribose 1-diphosphate. Residue Lys-156 participates in xanthine binding.

Belongs to the purine/pyrimidine phosphoribosyltransferase family. Xpt subfamily. In terms of assembly, homodimer.

It is found in the cytoplasm. The catalysed reaction is XMP + diphosphate = xanthine + 5-phospho-alpha-D-ribose 1-diphosphate. The protein operates within purine metabolism; XMP biosynthesis via salvage pathway; XMP from xanthine: step 1/1. Functionally, converts the preformed base xanthine, a product of nucleic acid breakdown, to xanthosine 5'-monophosphate (XMP), so it can be reused for RNA or DNA synthesis. This is Xanthine phosphoribosyltransferase from Deinococcus deserti (strain DSM 17065 / CIP 109153 / LMG 22923 / VCD115).